The primary structure comprises 329 residues: Diaminopimelate epimerase (329 aa).

Substrate is bound by residues Asn14 and Asn73. The active-site Proton donor is the Cys82. Residues 83-84, Asn170, Asn206, and 224-225 each bind substrate; these read GN and ER. Residue Cys233 is the Proton acceptor of the active site. 234–235 contributes to the substrate binding site; sequence GT.

This sequence belongs to the diaminopimelate epimerase family. In terms of assembly, homodimer.

It localises to the cytoplasm. It carries out the reaction (2S,6S)-2,6-diaminopimelate = meso-2,6-diaminopimelate. The protein operates within amino-acid biosynthesis; L-lysine biosynthesis via DAP pathway; DL-2,6-diaminopimelate from LL-2,6-diaminopimelate: step 1/1. Its function is as follows. Catalyzes the stereoinversion of LL-2,6-diaminopimelate (L,L-DAP) to meso-diaminopimelate (meso-DAP), a precursor of L-lysine and an essential component of the bacterial peptidoglycan. This is Diaminopimelate epimerase from Listeria innocua serovar 6a (strain ATCC BAA-680 / CLIP 11262).